Consider the following 479-residue polypeptide: Aspartyl/glutamyl-tRNA(Asn/Gln) amidotransferase subunit B (479 aa).

This sequence belongs to the GatB/GatE family. GatB subfamily. Heterotrimer of A, B and C subunits.

The enzyme catalyses L-glutamyl-tRNA(Gln) + L-glutamine + ATP + H2O = L-glutaminyl-tRNA(Gln) + L-glutamate + ADP + phosphate + H(+). It catalyses the reaction L-aspartyl-tRNA(Asn) + L-glutamine + ATP + H2O = L-asparaginyl-tRNA(Asn) + L-glutamate + ADP + phosphate + 2 H(+). Functionally, allows the formation of correctly charged Asn-tRNA(Asn) or Gln-tRNA(Gln) through the transamidation of misacylated Asp-tRNA(Asn) or Glu-tRNA(Gln) in organisms which lack either or both of asparaginyl-tRNA or glutaminyl-tRNA synthetases. The reaction takes place in the presence of glutamine and ATP through an activated phospho-Asp-tRNA(Asn) or phospho-Glu-tRNA(Gln). The chain is Aspartyl/glutamyl-tRNA(Asn/Gln) amidotransferase subunit B from Streptococcus pyogenes serotype M28 (strain MGAS6180).